The primary structure comprises 1080 residues: Kinesin-like protein KIN-14E (1080 aa).

The disordered stretch occupies residues M1–A35. Residues Q247–E355 are a coiled coil. The Kinesin motor domain occupies N407 to I729. G490–T497 is a binding site for ATP. Positions K736–K893 form a coiled coil. Positions A960–R970 are enriched in basic and acidic residues. A disordered region spans residues A960 to R1080. The span at S971–I985 shows a compositional bias: polar residues. The span at T1047–T1059 shows a compositional bias: low complexity.

It belongs to the TRAFAC class myosin-kinesin ATPase superfamily. Kinesin family. KIN-14 subfamily.

In Oryza sativa subsp. japonica (Rice), this protein is Kinesin-like protein KIN-14E.